Consider the following 481-residue polypeptide: Glutamine synthetase (481 aa).

Residues 22–106 (NEVEFVDFRF…VFCDVYDVYK (85 aa)) enclose the GS beta-grasp domain. A GS catalytic domain is found at 114–481 (PRSIAKKALK…PFEFITTYSC (368 aa)). Glu-139, Glu-141, Glu-223, and Glu-230 together coordinate Mg(2+). L-glutamate is bound by residues 274–275 (NG) and Gly-275. His-279 is a binding site for Mg(2+). Residues 281 to 283 (HVS) and Ser-283 each bind ATP. L-glutamate contacts are provided by Arg-331, Glu-337, and Arg-349. Residues Arg-349 and Arg-354 each contribute to the ATP site. Glu-367 serves as a coordination point for Mg(2+). Arg-369 contributes to the L-glutamate binding site.

Belongs to the glutamine synthetase family. Oligomer of 12 subunits arranged in the form of two hexameric ring. It depends on Mg(2+) as a cofactor.

The protein resides in the cytoplasm. The enzyme catalyses L-glutamate + NH4(+) + ATP = L-glutamine + ADP + phosphate + H(+). Its activity is regulated as follows. The activity of this enzyme could be controlled by adenylation under conditions of abundant glutamine. Functionally, catalyzes the ATP-dependent biosynthesis of glutamine from glutamate and ammonia. In Helicobacter pylori (strain J99 / ATCC 700824) (Campylobacter pylori J99), this protein is Glutamine synthetase.